A 485-amino-acid polypeptide reads, in one-letter code: Zinc finger protein 639 (485 aa).

Residues M1–H14 are compositionally biased toward basic residues. Positions M1 to D20 are disordered. The residue at position 60 (S60) is a Phosphoserine. Residue K76 forms a Glycyl lysine isopeptide (Lys-Gly) (interchain with G-Cter in SUMO2) linkage. S88 is modified (phosphoserine). Glycyl lysine isopeptide (Lys-Gly) (interchain with G-Cter in SUMO2) cross-links involve residues K177, K181, and K226. 8 consecutive C2H2-type zinc fingers follow at residues Y204–H227, N233–H255, Y260–H283, Y289–H311, F374–H397, H403–H425, Y431–H454, and H460–H482. Residues K371–S455 are interaction with CTNNA2.

It belongs to the krueppel C2H2-type zinc-finger protein family. As to quaternary structure, interacts with CTNNA2.

It localises to the nucleus. Functionally, binds DNA and may function as a transcriptional repressor. This chain is Zinc finger protein 639 (ZNF639), found in Homo sapiens (Human).